An 84-amino-acid chain; its full sequence is Exendin-2-long (84 aa).

The N-terminal stretch at 1–23 is a signal peptide; sequence MKSILWLCVFGLLIATLFPVSWQ. The propeptide occupies 24-44; sequence MAIKSRLSSEDSETDQRLFES.

Belongs to the glucagon family. An amidated Pro-81 is described. Such an amidation is however not compatible with the sequence displayed. Indeed cDNAs do not encode a Gly that could serve as substrate for peptide alpha-amidation. As to expression, expressed by the venom gland. Not expressed in the pancreas, liver, stomach, small intestine, lung, heart, kidney, spleen, ovary, and brain.

The protein resides in the secreted. In terms of biological role, has vasoactive intestinal peptide(VIP)/secretin-like biological activity. Interacts with rat and human VIP receptors 1 (VIPR1) and 2 (VIPR2), with the highest affinity for the human VIPR2. Induces hypotension that is mediated by relaxation of cardiac smooth muscle. This vasodilation may not be transduced by VIP or PACAP receptors. This Heloderma suspectum (Gila monster) protein is Exendin-2-long.